Reading from the N-terminus, the 299-residue chain is Acetaldehyde dehydrogenase (299 aa).

Cys126 (acyl-thioester intermediate) is an active-site residue. NAD(+) is bound by residues 157–165 (SAGPGTRQN) and Asn267.

Belongs to the acetaldehyde dehydrogenase family.

It catalyses the reaction acetaldehyde + NAD(+) + CoA = acetyl-CoA + NADH + H(+). The polypeptide is Acetaldehyde dehydrogenase (mhpF) (Carboxydothermus hydrogenoformans (strain ATCC BAA-161 / DSM 6008 / Z-2901)).